The primary structure comprises 117 residues: uncharacterized protein (117 aa).

It belongs to the transposase 34 family.

This is an uncharacterized protein from Sinorhizobium fredii (strain NBRC 101917 / NGR234).